We begin with the raw amino-acid sequence, 252 residues long: Pyrroloquinoline-quinone synthase (252 aa).

Belongs to the PqqC family.

The enzyme catalyses 6-(2-amino-2-carboxyethyl)-7,8-dioxo-1,2,3,4,7,8-hexahydroquinoline-2,4-dicarboxylate + 3 O2 = pyrroloquinoline quinone + 2 H2O2 + 2 H2O + H(+). It functions in the pathway cofactor biosynthesis; pyrroloquinoline quinone biosynthesis. Functionally, ring cyclization and eight-electron oxidation of 3a-(2-amino-2-carboxyethyl)-4,5-dioxo-4,5,6,7,8,9-hexahydroquinoline-7,9-dicarboxylic-acid to PQQ. In Acinetobacter baumannii (strain ACICU), this protein is Pyrroloquinoline-quinone synthase.